Consider the following 140-residue polypeptide: MMNIDDTTSPMAHPIGPSQPPSDQTKQDPPSLPQEAASSVSADKKDLALLEEKPKQSQEEDRVDTGRERLKKHRREIAGRVWIPEIWGQEELLKDWIDCSTFDTCLVPAGISSARTALVEEARRAASASGGLHNRCLILR.

Over residues 1 to 10 (MMNIDDTTSP) the composition is skewed to polar residues. The interval 1 to 71 (MMNIDDTTSP…RVDTGRERLK (71 aa)) is disordered. Positions 42 to 68 (ADKKDLALLEEKPKQSQEEDRVDTGRE) are enriched in basic and acidic residues.

Interacts with CRY2 in both darkness and light.

The protein resides in the nucleus. Its function is as follows. Regulates the blue-light dependent dimerization of CRY2 and formation of photobodies. Interacts with photoexited CRY2 to inhibit its activity. Inhibits CRY phosphorylation. The polypeptide is Protein BIC1 (Arabidopsis thaliana (Mouse-ear cress)).